Here is a 664-residue protein sequence, read N- to C-terminus: Protein cueball (664 aa).

The first 21 residues, 1-21 (MRNLGIAVTFAVLLVIGYVTA), serve as a signal peptide directing secretion. Over 22 to 552 (LEWDAVVTTD…VTYCKNSFNR (531 aa)) the chain is Extracellular. 3 N-linked (GlcNAc...) asparagine glycosylation sites follow: asparagine 40, asparagine 140, and asparagine 188. 3 LDL-receptor class B repeats span residues 115–157 (RKLY…ENHD), 168–211 (RHLY…DHYN), and 212–257 (NRIY…NSQY). EGF-like domains are found at residues 367 to 399 (EIPICNNFCVHGECVVGADSRPMCKCHAEFEGE), 402 to 438 (DRNICDGYCLNNGRCALSATGQRSCTCSKNFSGARCE), and 473 to 510 (EEYTCNNYCLHDGTCILNNDTMLVECRCGSEYTGKRCE). Intrachain disulfides connect cysteine 371/cysteine 380, cysteine 375/cysteine 390, cysteine 406/cysteine 416, cysteine 410/cysteine 426, cysteine 428/cysteine 437, cysteine 477/cysteine 487, cysteine 481/cysteine 498, and cysteine 500/cysteine 509. The N-linked (GlcNAc...) asparagine glycan is linked to asparagine 431. The N-linked (GlcNAc...) asparagine glycan is linked to asparagine 491. Asparagine 551 carries an N-linked (GlcNAc...) asparagine glycan. The helical transmembrane segment at 553–573 (TVVYVSLAFTASLVTLVTILC) threads the bilayer. Over 574–664 (TVRRMYERNR…KLPSCVAEKN (91 aa)) the chain is Cytoplasmic.

Belongs to the cueball family.

It localises to the cell membrane. Its function is as follows. Has a role in spermatogenesis and oogenesis. This Aedes aegypti (Yellowfever mosquito) protein is Protein cueball.